A 202-amino-acid polypeptide reads, in one-letter code: Na(+)-translocating NADH-quinone reductase subunit E (202 aa).

A run of 6 helical transmembrane segments spans residues 11-31 (SVFIENMALAFFLGMCTFIAI), 35-55 (VETAIGLGIAVVVVQAITVPA), 81-101 (FLGFLSYIGVIAAIVQILEML), 114-134 (GIYLPLITVNCAIMAGSLFMV), 144-164 (VVYGIGSGFSWALAIALLAGI), and 180-200 (LGIAFITIGLMSLGFMSFSGI).

This sequence belongs to the NqrDE/RnfAE family. In terms of assembly, composed of six subunits; NqrA, NqrB, NqrC, NqrD, NqrE and NqrF.

The protein localises to the cell inner membrane. It carries out the reaction a ubiquinone + n Na(+)(in) + NADH + H(+) = a ubiquinol + n Na(+)(out) + NAD(+). Its function is as follows. NQR complex catalyzes the reduction of ubiquinone-1 to ubiquinol by two successive reactions, coupled with the transport of Na(+) ions from the cytoplasm to the periplasm. NqrA to NqrE are probably involved in the second step, the conversion of ubisemiquinone to ubiquinol. This is Na(+)-translocating NADH-quinone reductase subunit E from Azotobacter vinelandii (strain DJ / ATCC BAA-1303).